A 108-amino-acid polypeptide reads, in one-letter code: Small ribosomal subunit protein eS25A (108 aa).

The segment covering M1–G20 has biased composition (low complexity). The tract at residues M1–K30 is disordered. At P2 the chain carries N,N-dimethylproline; by NTM1. A compositionally biased stretch (basic residues) spans K21–K30.

Belongs to the eukaryotic ribosomal protein eS25 family. Component of the small ribosomal subunit (SSU). Mature yeast ribosomes consist of a small (40S) and a large (60S) subunit. The 40S small subunit contains 1 molecule of ribosomal RNA (18S rRNA) and 33 different proteins (encoded by 57 genes). The large 60S subunit contains 3 rRNA molecules (25S, 5.8S and 5S rRNA) and 46 different proteins (encoded by 81 genes).

Its subcellular location is the cytoplasm. Its function is as follows. Component of the ribosome, a large ribonucleoprotein complex responsible for the synthesis of proteins in the cell. The small ribosomal subunit (SSU) binds messenger RNAs (mRNAs) and translates the encoded message by selecting cognate aminoacyl-transfer RNA (tRNA) molecules. The large subunit (LSU) contains the ribosomal catalytic site termed the peptidyl transferase center (PTC), which catalyzes the formation of peptide bonds, thereby polymerizing the amino acids delivered by tRNAs into a polypeptide chain. The nascent polypeptides leave the ribosome through a tunnel in the LSU and interact with protein factors that function in enzymatic processing, targeting, and the membrane insertion of nascent chains at the exit of the ribosomal tunnel. The polypeptide is Small ribosomal subunit protein eS25A (Saccharomyces cerevisiae (strain ATCC 204508 / S288c) (Baker's yeast)).